We begin with the raw amino-acid sequence, 303 residues long: tRNA dimethylallyltransferase (303 aa).

An ATP-binding site is contributed by 16-23 (GPTASGKS). 18–23 (TASGKS) serves as a coordination point for substrate. An interaction with substrate tRNA region spans residues 41 to 44 (DSMQ). The tract at residues 141-161 (AEALHGELSARDPETAGRVRP) is disordered. The segment at 165–169 (QRIVR) is interaction with substrate tRNA.

It belongs to the IPP transferase family. In terms of assembly, monomer. It depends on Mg(2+) as a cofactor.

The enzyme catalyses adenosine(37) in tRNA + dimethylallyl diphosphate = N(6)-dimethylallyladenosine(37) in tRNA + diphosphate. Catalyzes the transfer of a dimethylallyl group onto the adenine at position 37 in tRNAs that read codons beginning with uridine, leading to the formation of N6-(dimethylallyl)adenosine (i(6)A). The polypeptide is tRNA dimethylallyltransferase (Rhizobium meliloti (strain 1021) (Ensifer meliloti)).